We begin with the raw amino-acid sequence, 64 residues long: MAARCAVCGKGPQTGFTVSHSHRRTKRSFRPNLQSVRTTIDGENTRLRVCVKCLKAGKVQRVAA.

The protein belongs to the bacterial ribosomal protein bL28 family.

This chain is Large ribosomal subunit protein bL28, found in Bifidobacterium longum (strain NCC 2705).